Consider the following 78-residue polypeptide: Large ribosomal subunit protein bL28 (78 aa).

The protein belongs to the bacterial ribosomal protein bL28 family.

This chain is Large ribosomal subunit protein bL28, found in Prochlorococcus marinus (strain MIT 9312).